We begin with the raw amino-acid sequence, 873 residues long: Leucine--tRNA ligase (873 aa).

The short motif at Pro41–His51 is the 'HIGH' region element. A 'KMSKS' region motif is present at residues Lys645–Ser649. ATP is bound at residue Lys648.

Belongs to the class-I aminoacyl-tRNA synthetase family.

It localises to the cytoplasm. The catalysed reaction is tRNA(Leu) + L-leucine + ATP = L-leucyl-tRNA(Leu) + AMP + diphosphate. This is Leucine--tRNA ligase from Cereibacter sphaeroides (strain ATCC 17025 / ATH 2.4.3) (Rhodobacter sphaeroides).